The following is a 320-amino-acid chain: Cytochrome f (320 aa).

The first 35 residues, 1–35 (MQTRNTFSSIKEEITRSISVSLMIYIITWAPVSNA), serve as a signal peptide directing secretion. Residues Tyr-36, Cys-56, Cys-59, and His-60 each coordinate heme. Residues 286–306 (VQGLLFFFASVILAQIFLVLK) form a helical membrane-spanning segment.

It belongs to the cytochrome f family. As to quaternary structure, the 4 large subunits of the cytochrome b6-f complex are cytochrome b6, subunit IV (17 kDa polypeptide, petD), cytochrome f and the Rieske protein, while the 4 small subunits are PetG, PetL, PetM and PetN. The complex functions as a dimer. The cofactor is heme.

The protein localises to the plastid. The protein resides in the chloroplast thylakoid membrane. In terms of biological role, component of the cytochrome b6-f complex, which mediates electron transfer between photosystem II (PSII) and photosystem I (PSI), cyclic electron flow around PSI, and state transitions. The chain is Cytochrome f from Cucumis sativus (Cucumber).